Reading from the N-terminus, the 394-residue chain is Elongation factor Tu (394 aa).

The region spanning 10–204 (KPHVNVGTIG…HLDTYIPEPE (195 aa)) is the tr-type G domain. A G1 region spans residues 19-26 (GHVDHGKT). Residue 19-26 (GHVDHGKT) coordinates GTP. Thr-26 lines the Mg(2+) pocket. The G2 stretch occupies residues 60–64 (GITIN). Residues 81–84 (DCPG) form a G3 region. GTP contacts are provided by residues 81–85 (DCPGH) and 136–139 (NKCD). The interval 136-139 (NKCD) is G4. Residues 174–176 (SAL) are G5.

It belongs to the TRAFAC class translation factor GTPase superfamily. Classic translation factor GTPase family. EF-Tu/EF-1A subfamily. As to quaternary structure, monomer.

The protein localises to the cytoplasm. The catalysed reaction is GTP + H2O = GDP + phosphate + H(+). GTP hydrolase that promotes the GTP-dependent binding of aminoacyl-tRNA to the A-site of ribosomes during protein biosynthesis. The sequence is that of Elongation factor Tu from Aeromonas salmonicida (strain A449).